The following is a 543-amino-acid chain: Organic anion transporter 3 (543 aa).

Topologically, residues 1–21 (MTFAELVDRVGSKGPFQLLHT) are cytoplasmic. A helical transmembrane segment spans residues 22 to 42 (VLLGLPILGMANHNLLQIFTA). The Extracellular segment spans residues 43 to 124 (PTPAHHCRPP…LVCSSSKLKE (82 aa)). The N-linked (GlcNAc...) asparagine glycan is linked to Asn-81. The chain crosses the membrane as a helical span at residues 125-145 (MAQSVFMAGILVGGLVLGALS). The Cytoplasmic segment spans residues 146-151 (DRFGRK). The helical transmembrane segment at 152–172 (PILIFSYLLLGASGSGAAFSP) threads the bilayer. The Extracellular segment spans residues 173–181 (TFSIYAVFR). The helical transmembrane segment at 182-202 (FLCGFSISGISLSTAILNVEW) threads the bilayer. Residues 203–212 (VSTRFRAIKS) are Cytoplasmic-facing. A helical membrane pass occupies residues 213 to 233 (IAVGFFYTFGQFILPGLAYAI). Residues 234–237 (PQWR) lie on the Extracellular side of the membrane. The helical transmembrane segment at 238-258 (WLQLTVSVPFLTFFLLSWWLP) threads the bilayer. At 259–328 (ESIRWMVLSG…FRTPVLRRVT (70 aa)) the chain is on the cytoplasmic side. The chain crosses the membrane as a helical span at residues 329–349 (LCLSLAWFATGFAYYSLAMGV). Residues 350-355 (EEFGVN) lie on the Extracellular side of the membrane. Residues 356–376 (LYVLQLIFGGVDVPAKFITML) form a helical membrane-spanning segment. Residues 377–388 (SISYLGRHITEG) lie on the Cytoplasmic side of the membrane. Residues 389-409 (IVLLLAGGCILALIFVPLDLM) traverse the membrane as a helical segment. Residues 410-412 (TLR) lie on the Extracellular side of the membrane. A helical membrane pass occupies residues 413–433 (TVLAVFGKGCLSGSFSCLFLY). Topologically, residues 434 to 472 (TSELYPTVIRQTGMGASNLWARVGSMTAPLVKITGELQP) are cytoplasmic. The chain crosses the membrane as a helical span at residues 473–493 (FIPNIIFGTIALLGGSAALFL). Over 494–543 (PETLNRPLPETIEDIETWSLRAKEPKPEPEAEKSSQRIPLQPCEPGPGPS) the chain is Extracellular. The segment at 513-543 (LRAKEPKPEPEAEKSSQRIPLQPCEPGPGPS) is disordered. Over residues 514–528 (RAKEPKPEPEAEKSS) the composition is skewed to basic and acidic residues.

It belongs to the major facilitator (TC 2.A.1) superfamily. Organic cation transporter (TC 2.A.1.19) family. In terms of tissue distribution, expressed in kidney.

Its subcellular location is the basolateral cell membrane. The enzyme catalyses estrone 3-sulfate(out) + glutarate(in) = estrone 3-sulfate(in) + glutarate(out). It catalyses the reaction estrone 3-sulfate(in) + 2-oxoglutarate(out) = estrone 3-sulfate(out) + 2-oxoglutarate(in). It carries out the reaction glutarate(in) + 2-oxoglutarate(out) = glutarate(out) + 2-oxoglutarate(in). The catalysed reaction is urate(in) + 2-oxoglutarate(out) = urate(out) + 2-oxoglutarate(in). The enzyme catalyses taurocholate(out) + glutarate(in) = taurocholate(in) + glutarate(out). It catalyses the reaction dehydroepiandrosterone 3-sulfate(out) + glutarate(in) = dehydroepiandrosterone 3-sulfate(in) + glutarate(out). It carries out the reaction prostaglandin F2alpha(out) + glutarate(in) = prostaglandin F2alpha(in) + glutarate(out). The catalysed reaction is prostaglandin F2alpha(out) + 2-oxoglutarate(in) = prostaglandin F2alpha(in) + 2-oxoglutarate(out). The enzyme catalyses (R)-carnitine(out) + 2-oxoglutarate(in) = (R)-carnitine(in) + 2-oxoglutarate(out). It catalyses the reaction glutarate(in) + (R)-carnitine(out) = glutarate(out) + (R)-carnitine(in). It carries out the reaction prostaglandin E2(out) + 2-oxoglutarate(in) = prostaglandin E2(in) + 2-oxoglutarate(out). The catalysed reaction is prostaglandin E2(out) + glutarate(in) = prostaglandin E2(in) + glutarate(out). The enzyme catalyses urate(in) + glutarate(out) = urate(out) + glutarate(in). It catalyses the reaction taurocholate(out) + 2-oxoglutarate(in) = taurocholate(in) + 2-oxoglutarate(out). It carries out the reaction dehydroepiandrosterone 3-sulfate(out) + 2-oxoglutarate(in) = dehydroepiandrosterone 3-sulfate(in) + 2-oxoglutarate(out). The catalysed reaction is kynurenate(out) + a dicarboxylate(in) = kynurenate(in) + a dicarboxylate(out). The enzyme catalyses (indol-3-yl)acetate(out) + a dicarboxylate(in) = (indol-3-yl)acetate(in) + a dicarboxylate(out). It catalyses the reaction indoxyl sulfate(out) + a dicarboxylate(in) = indoxyl sulfate(in) + a dicarboxylate(out). It carries out the reaction N-benzoylglycine(out) + a dicarboxylate(in) = N-benzoylglycine(in) + a dicarboxylate(out). The catalysed reaction is 3-carboxy-4-methyl-5-propyl-2-furanpropanoate(out) + a dicarboxylate(in) = 3-carboxy-4-methyl-5-propyl-2-furanpropanoate(in) + a dicarboxylate(out). The enzyme catalyses (6R)-L-erythro-5,6,7,8-tetrahydrobiopterin(out) + a dicarboxylate(in) = (6R)-L-erythro-5,6,7,8-tetrahydrobiopterin(in) + a dicarboxylate(out). It catalyses the reaction L-erythro-7,8-dihydrobiopterin(out) + a dicarboxylate(in) = L-erythro-7,8-dihydrobiopterin(in) + a dicarboxylate(out). It carries out the reaction L-sepiapterin(out) + a dicarboxylate(in) = L-sepiapterin(in) + a dicarboxylate(out). In terms of biological role, functions as an organic anion/dicarboxylate exchanger that couples organic anion uptake indirectly to the sodium gradient. Transports organic anions such as estrone 3-sulfate (E1S) and urate in exchange for dicarboxylates such as glutarate or ketoglutarate (2-oxoglutarate). Plays an important role in the excretion of endogenous and exogenous organic anions, especially from the kidney and the brain. E1S transport is pH- and chloride-dependent and may also involve E1S/cGMP exchange. Responsible for the transport of prostaglandin E2 (PGE2) and prostaglandin F2(alpha) (PGF2(alpha)) in the basolateral side of the renal tubule. Involved in the transport of neuroactive tryptophan metabolites kynurenate and xanthurenate. Functions as a biopterin transporters involved in the uptake and the secretion of coenzymes tetrahydrobiopterin (BH4), dihydrobiopterin (BH2) and sepiapterin to urine, thereby determining baseline levels of blood biopterins. May be involved in the basolateral transport of steviol, a metabolite of the popular sugar substitute stevioside. May participate in the detoxification/ renal excretion of drugs and xenobiotics, such as the histamine H(2)-receptor antagonists fexofenadine and cimetidine, the antibiotic benzylpenicillin (PCG), the anionic herbicide 2,4-dichloro-phenoxyacetate (2,4-D), the diagnostic agent p-aminohippurate (PAH), the antiviral acyclovir (ACV), and the mycotoxin ochratoxin (OTA), by transporting these exogenous organic anions across the cell membrane in exchange for dicarboxylates such as 2-oxoglutarate. Contributes to the renal uptake of potent uremic toxins (indoxyl sulfate (IS), indole acetate (IA), hippurate/N-benzoylglycine (HA) and 3-carboxy-4-methyl-5-propyl-2-furanpropionate (CMPF)), pravastatin, PCG, E1S and dehydroepiandrosterone sulfate (DHEAS), and is partly involved in the renal uptake of temocaprilat (an angiotensin-converting enzyme (ACE) inhibitor). May contribute to the release of cortisol in the adrenals. Involved in one of the detoxification systems on the choroid plexus (CP), removes substrates such as E1S or taurocholate (TC), PCG, 2,4-D and PAH, from the cerebrospinal fluid (CSF) to the blood for eventual excretion in urine and bile. Also contributes to the uptake of several other organic compounds such as the prostanoids prostaglandin E(2) and prostaglandin F(2-alpha), L-carnitine, and the therapeutic drugs allopurinol, 6-mercaptopurine (6-MP) and 5-fluorouracil (5-FU). Mediates the transport of PAH, PCG, and the statins pravastatin and pitavastatin, from the cerebrum into the blood circulation across the blood-brain barrier (BBB). In summary, plays a role in the efflux of drugs and xenobiotics, helping reduce their undesired toxicological effects on the body. The polypeptide is Organic anion transporter 3 (SLC22A8) (Sus scrofa (Pig)).